A 79-amino-acid chain; its full sequence is Small ribosomal subunit protein eS17 (79 aa).

The protein belongs to the eukaryotic ribosomal protein eS17 family.

In Saccharolobus solfataricus (strain ATCC 35092 / DSM 1617 / JCM 11322 / P2) (Sulfolobus solfataricus), this protein is Small ribosomal subunit protein eS17.